The following is a 544-amino-acid chain: Chaperonin GroEL (544 aa).

Residues 29–32 (TLGP), lysine 50, 86–90 (DGTTT), glycine 415, and aspartate 495 contribute to the ATP site.

This sequence belongs to the chaperonin (HSP60) family. In terms of assembly, forms a cylinder of 14 subunits composed of two heptameric rings stacked back-to-back. Interacts with the co-chaperonin GroES.

It localises to the cytoplasm. It carries out the reaction ATP + H2O + a folded polypeptide = ADP + phosphate + an unfolded polypeptide.. Together with its co-chaperonin GroES, plays an essential role in assisting protein folding. The GroEL-GroES system forms a nano-cage that allows encapsulation of the non-native substrate proteins and provides a physical environment optimized to promote and accelerate protein folding. The chain is Chaperonin GroEL from Tannerella forsythia (Bacteroides forsythus).